We begin with the raw amino-acid sequence, 153 residues long: Small ribosomal subunit protein uS19 (153 aa).

The protein belongs to the universal ribosomal protein uS19 family.

In Elaeis oleifera (American oil palm), this protein is Small ribosomal subunit protein uS19 (RPS15).